The sequence spans 735 residues: Protostadienol synthase helA (735 aa).

One copy of the PFTB 1 repeat lies at 132-173 (KQEMCRYLLNVVNEDGGWGLFIQSPSTVFGTVMNYCMLRILG). Asp-463 acts as the Proton donor in catalysis. PFTB repeat units lie at residues 490-531 (LQQA…YENV), 567-607 (LSRS…ACMG), and 616-663 (CQRA…AVIG).

Belongs to the terpene cyclase/mutase family.

The enzyme catalyses (S)-2,3-epoxysqualene = (17Z)-protosta-17(20),24-dien-3beta-ol. It participates in mycotoxin biosynthesis. Its function is as follows. Protostadienol synthase; part of the gene cluster that mediates the biosynthesis of helvolic acid, an antibacterial nortriterpenoid. Protostadienol synthase helA cyclizes (3S)-oxidosqualene to (17Z)-protosta-17(20),24-dien-3-beta-ol (protostadienol). The synthesis of protostadienol is followed by several steps of monooxygenation, dehydrogenation, and acyl transfer to yield the final helvolic acid. Following the cyclization to the tetracyclic protostadienol by helA, cytochrome P450 monooxygenases helB1-mediated and helB2-mediated oxidation at C-4 and C-16, acyltransferase helD2-dependent acetylation of 16-OH, oxidation of C-21 by cytochrome P450 monooxygenase helB4, and short chain dehydrogenase helC-dependent oxidative decarboxylation yield the fusidane skeleton. This intermediate is further modified in three additional steps mediated by the cytochrome P450 monooxygenase helB3, the acyltransferase helD1, and the 3-ketosteroid 1-dehydrogenase helE to give helvolic acid. Compared with the late stages in the biosynthesis of helvolic acid, enzymes involved in the early stage modifications act in a relatively strict order. The hydroxylation of C-16 by helB1 and subsequent acetylation by helD2 should occur before the helB3-mediated oxidation of C-21. C-4 demethylation in fusidane-type antibiotics proceeds in an unusual manner though it is also achieved by oxidative decarboxylation. The methyl group at C-4 beta position is oxidized by helB1 and subsequently removed by the short chain dehydrogenase helC. The protein is Protostadienol synthase helA of Aspergillus fumigatus (strain ATCC MYA-4609 / CBS 101355 / FGSC A1100 / Af293) (Neosartorya fumigata).